An 863-amino-acid chain; its full sequence is MGVRHSASKDYIAGRPLVPGEAPLDKKNSNFSSWKPVTEIDDRDAKCADNWVPRHPDLIRLTGKHPFNSEPPHADVMKEGWLTPVSMHFVRNHGAVPRLEWGSHRITITGLVERPMEITMDDIAKLPAVTVPCLLTCCGNRRKEVNMVKNSQGFSWGPGAVSVNNWTGARLSDVLKLVGVKSQAQGAKYVHFCGPKGELPKGVDGSYGTALTLGHALDPSMDVLIAYKQNGQFLHPDHGFPCRMLIPGWIGGRSVKWLSHLHVSDKDSQNWYHFHDNKVLPPHVDAESAAKQGWWKDPSFILKELNINSTISSPGHDERILMDQNRRYTMKGYAYSGGGRKIVRVEVSFNGGETWSHPAKIIVTETPNQAGKHWTWVHWELPVDTSQFFTATEVVCRAWDESQNTQPAVLTWTLLGQGNNSMFRLRLHKEVDPQGRLCIRFQQPAPILPGPLGNVGWREQEAGSAVPSAPAAVAAAAPGLDSTKKYVTKAMLEQHVEEASVWFAYKGKVYDGTKFLDDHPGGADSILMAGGEDATEDFDAVHSDSAKKQLEQFYIAELAPEGVPVPANLLYGGVDAAVVVMPGTAAAPLPAIDVDAPFLNPKKQKAAELKEKIKISHDVTLFRFGLEHDEQLLGLPTGKHMLIRKKVTNAEGDEEVVMRAYTPTTANETRGHFDLVVKIYKANVHPKFPEGGKFSQILEALEVGDTVEVKGPIGHFHYDRPGHYKNHKLESEVKRINMIAGGTGLTPMYQVMKAILSNPSDLTEIRLLYANQTEADILLRPELEALAKSHPDRVKIHYTVDRPTPGWKYSSGFIDLDMCERALFRYEPGTISVLCGPPPMLKFACHPNLEKMGFEKGVTSIEF.

C137 provides a ligand contact to Mo-molybdopterin. Residues 484 to 559 (KKYVTKAMLE…LEQFYIAELA (76 aa)) enclose the Cytochrome b5 heme-binding domain. 2 residues coordinate heme: H519 and H542. In terms of domain architecture, FAD-binding FR-type spans 602-719 (KKQKAAELKE…KGPIGHFHYD (118 aa)). FAD is bound by residues 659 to 662 (RAYT), 676 to 680 (VVKIY), F688, 693 to 695 (KFS), and T746.

Belongs to the nitrate reductase family. In terms of assembly, homodimer. The cofactor is FAD. Requires Mo-molybdopterin as cofactor. Heme is required as a cofactor.

The enzyme catalyses nitrite + NAD(+) + H2O = nitrate + NADH + H(+). Functionally, nitrate reductase is a key enzyme involved in the first step of nitrate assimilation in plants, fungi and bacteria. The sequence is that of Nitrate reductase [NADH] from Ulva prolifera (Green seaweed).